Consider the following 300-residue polypeptide: 1D-myo-inositol 2-acetamido-2-deoxy-alpha-D-glucopyranoside deacetylase (300 aa).

Residues H13, D16, and H147 each coordinate Zn(2+).

It belongs to the MshB deacetylase family. Requires Zn(2+) as cofactor.

The enzyme catalyses 1D-myo-inositol 2-acetamido-2-deoxy-alpha-D-glucopyranoside + H2O = 1D-myo-inositol 2-amino-2-deoxy-alpha-D-glucopyranoside + acetate. Its function is as follows. Catalyzes the deacetylation of 1D-myo-inositol 2-acetamido-2-deoxy-alpha-D-glucopyranoside (GlcNAc-Ins) in the mycothiol biosynthesis pathway. This is 1D-myo-inositol 2-acetamido-2-deoxy-alpha-D-glucopyranoside deacetylase from Mycobacterium avium (strain 104).